The following is a 92-amino-acid chain: C-C motif chemokine 4 (92 aa).

An N-terminal signal peptide occupies residues 1–23 (MKLGVTVLSVALLVAALCPPALS). 2 disulfide bridges follow: Cys34/Cys58 and Cys35/Cys74.

Belongs to the intercrine beta (chemokine CC) family. As to quaternary structure, homodimer.

It localises to the secreted. Monokine with inflammatory and chemokinetic properties. In Oryctolagus cuniculus (Rabbit), this protein is C-C motif chemokine 4 (CCL4).